A 217-amino-acid polypeptide reads, in one-letter code: MSSKVSRDTLYEAVREVLHGNQRKRRKFLETVELQISLKNYDPQKDKRFSGTVRLKSTPRPKFSVCVLGDQQHCDEAKAVDIPHMDIEALKKLNKNKKLVKKLAKKYDAFLASESLIKQIPRILGPGLNKAGKFPSLLTHNENMVAKVDEVKSTIKFQMKKVLCLAVAVGHVKMTDDELVYNIHLAVNFLVSLLKKNWQNVRALYIKSTMGKPQRLY.

Ser2 is subject to N-acetylserine. Position 11 is a phosphotyrosine (Tyr11). Lys91 and Lys106 each carry N6-acetyllysine. Lys118 carries the N6-acetyllysine; alternate modification. Residue Lys118 forms a Glycyl lysine isopeptide (Lys-Gly) (interchain with G-Cter in SUMO1); alternate linkage. Lys118 is covalently cross-linked (Glycyl lysine isopeptide (Lys-Gly) (interchain with G-Cter in SUMO2); alternate). Residue Lys161 forms a Glycyl lysine isopeptide (Lys-Gly) (interchain with G-Cter in SUMO2) linkage.

The protein belongs to the universal ribosomal protein uL1 family. As to quaternary structure, component of the large ribosomal subunit.

Its subcellular location is the cytoplasm. Its function is as follows. Component of the large ribosomal subunit. The ribosome is a large ribonucleoprotein complex responsible for the synthesis of proteins in the cell. The protein is Large ribosomal subunit protein uL1 (RPL10A) of Bos taurus (Bovine).